A 53-amino-acid chain; its full sequence is uncharacterized protein (53 aa).

The protein localises to the mitochondrion matrix. It localises to the kinetoplast. This is an uncharacterized protein from Trypanosoma brucei brucei.